The following is a 256-amino-acid chain: Thiazole synthase (256 aa).

The Schiff-base intermediate with DXP role is filled by K95. 1-deoxy-D-xylulose 5-phosphate-binding positions include G156, 182–183, and 204–205; these read AG and NT.

This sequence belongs to the ThiG family. Homotetramer. Forms heterodimers with either ThiH or ThiS.

It is found in the cytoplasm. It carries out the reaction [ThiS sulfur-carrier protein]-C-terminal-Gly-aminoethanethioate + 2-iminoacetate + 1-deoxy-D-xylulose 5-phosphate = [ThiS sulfur-carrier protein]-C-terminal Gly-Gly + 2-[(2R,5Z)-2-carboxy-4-methylthiazol-5(2H)-ylidene]ethyl phosphate + 2 H2O + H(+). It functions in the pathway cofactor biosynthesis; thiamine diphosphate biosynthesis. Functionally, catalyzes the rearrangement of 1-deoxy-D-xylulose 5-phosphate (DXP) to produce the thiazole phosphate moiety of thiamine. Sulfur is provided by the thiocarboxylate moiety of the carrier protein ThiS. In vitro, sulfur can be provided by H(2)S. The sequence is that of Thiazole synthase from Klebsiella pneumoniae (strain 342).